The following is an 87-amino-acid chain: Small ribosomal subunit protein uS17 (87 aa).

The protein belongs to the universal ribosomal protein uS17 family. In terms of assembly, part of the 30S ribosomal subunit.

Its function is as follows. One of the primary rRNA binding proteins, it binds specifically to the 5'-end of 16S ribosomal RNA. In Staphylococcus carnosus (strain TM300), this protein is Small ribosomal subunit protein uS17.